The primary structure comprises 636 residues: Polyadenylate-binding protein 1 (636 aa).

M1 is subject to N-acetylmethionine. 4 consecutive RRM domains span residues 11–89, 99–175, 191–268, and 294–370; these read ASLY…WSQR, GNIF…RFKS, TNVY…RAQK, and VNLY…LAQR. Positions 166-289 are CSDE1-binding; sequence RKVFVGRFKS…FEQMKQDRIT (124 aa). An N6-methyllysine modification is found at K299. A Phosphoserine modification is found at S315. T319 is modified (phosphothreonine). An omega-N-methylarginine mark is found at R385, R419, R432, and R436. R455 and R460 each carry omega-N-methylated arginine; by CARM1. 2 positions are modified to omega-N-methylarginine: R475 and R481. At R493 the chain carries Asymmetric dimethylarginine; alternate. Residue R493 is modified to Dimethylated arginine; alternate. Omega-N-methylarginine; alternate is present on R493. The residue at position 506 (R506) is an Omega-N-methylarginine. K512 carries the N6-acetyllysine modification. R518 bears the Omega-N-methylarginine mark. In terms of domain architecture, PABC spans 542–619; sequence QEPLTASMLA…AVAVLQAHQA (78 aa).

Belongs to the polyadenylate-binding protein type-1 family. May form homodimers. Component of a multisubunit autoregulatory ribonucleoprotein complex (ARC), at least composed of IGF2BP1, PABPC1 and CSDE1. Directly interacts with IGF2BP1. Part of a complex associated with the FOS mCRD domain and consisting of HNRPD, SYNCRIP, PAIP1 and CSDE1/UNR. Interacts with PAIP1 and PAIP2 (via the PABPC1-interacting motifs PAM1 and PAM2). Interacts with PAIP1 with a 1:1 stoichiometry and with PAIP2 with a 1:2 stoichiometry. The interaction with CSDE1 is direct and RNA-independent. Found in a mRNP complex with YBX2. Interacts with TENT2/GLD2. Identified in the spliceosome C complex. Identified in a mRNP complex, at least composed of DHX9, DDX3X, ELAVL1, HNRNPU, IGF2BP1, ILF3, PABPC1, PCBP2, PTBP2, STAU1, STAU2, SYNCRIP and YBX1. The interaction with DDX3X is direct and RNA-independent. This interaction increases in stressed cells and decreases during cell recovery. Identified in a IGF2BP1-dependent mRNP granule complex containing untranslated mRNAs. Interacts with NXF1/TAP. Interacts with PIWIL1. Interacts with AGO1, AGO2, GSPT1 and GSPT2. Interacts with LARP4B. Interacts (via the second and third RRM domains and the C-terminus) with PAIP2B (via central acidic portion and C-terminus). Forms a complex with LARP1 and SHFL. Interacts with LARP4. Interacts with ZFC3H1 in a RNase-sensitive manner. Interacts with TRIM71 (via NHL repeats) in an RNA-dependent manner. Interacts with TENT5C; the interaction has no effect on TENT5C poly(A) polymerase function. Interacts with G3BP1 and G3BP2. Interacts with ENDOV; the interaction is RNA-dependent and stimulates ENDOV activity. Interacts with UPF1; the interaction is RNA-dependent. Interacts with IGF2BP2 and IGF2BP3. May interact with SETX. Interacts with RBM46. Interacts with PAN3. Post-translationally, phosphorylated by MAPKAPK2. In terms of processing, methylated by CARM1. Arg-493 is dimethylated, probably to asymmetric dimethylarginine.

The protein resides in the cytoplasm. It is found in the stress granule. Its subcellular location is the nucleus. The protein localises to the cell projection. It localises to the lamellipodium. Functionally, binds the poly(A) tail of mRNA, including that of its own transcript, and regulates processes of mRNA metabolism such as pre-mRNA splicing and mRNA stability. Its function in translational initiation regulation can either be enhanced by PAIP1 or repressed by PAIP2. Can probably bind to cytoplasmic RNA sequences other than poly(A) in vivo. Binds to N6-methyladenosine (m6A)-containing mRNAs and contributes to MYC stability by binding to m6A-containing MYC mRNAs. Involved in translationally coupled mRNA turnover. Implicated with other RNA-binding proteins in the cytoplasmic deadenylation/translational and decay interplay of the FOS mRNA mediated by the major coding-region determinant of instability (mCRD) domain. Involved in regulation of nonsense-mediated decay (NMD) of mRNAs containing premature stop codons; for the recognition of premature termination codons (PTC) and initiation of NMD a competitive interaction between UPF1 and PABPC1 with the ribosome-bound release factors is proposed. By binding to long poly(A) tails, may protect them from uridylation by ZCCHC6/ZCCHC11 and hence contribute to mRNA stability. The sequence is that of Polyadenylate-binding protein 1 (PABPC1) from Pongo abelii (Sumatran orangutan).